The primary structure comprises 421 residues: Histidine--tRNA ligase (421 aa).

Belongs to the class-II aminoacyl-tRNA synthetase family. Homodimer.

The protein localises to the cytoplasm. It catalyses the reaction tRNA(His) + L-histidine + ATP = L-histidyl-tRNA(His) + AMP + diphosphate + H(+). The protein is Histidine--tRNA ligase of Nitrosomonas eutropha (strain DSM 101675 / C91 / Nm57).